A 668-amino-acid chain; its full sequence is Fructose-1,6-bisphosphatase class 3 (668 aa).

Belongs to the FBPase class 3 family. Requires Mn(2+) as cofactor.

The catalysed reaction is beta-D-fructose 1,6-bisphosphate + H2O = beta-D-fructose 6-phosphate + phosphate. It functions in the pathway carbohydrate biosynthesis; gluconeogenesis. The chain is Fructose-1,6-bisphosphatase class 3 from Clostridium botulinum (strain 657 / Type Ba4).